We begin with the raw amino-acid sequence, 305 residues long: UDP-3-O-acyl-N-acetylglucosamine deacetylase (305 aa).

Zn(2+) contacts are provided by His-78, His-237, and Asp-241. His-264 serves as the catalytic Proton donor.

It belongs to the LpxC family. It depends on Zn(2+) as a cofactor.

The enzyme catalyses a UDP-3-O-[(3R)-3-hydroxyacyl]-N-acetyl-alpha-D-glucosamine + H2O = a UDP-3-O-[(3R)-3-hydroxyacyl]-alpha-D-glucosamine + acetate. It participates in glycolipid biosynthesis; lipid IV(A) biosynthesis; lipid IV(A) from (3R)-3-hydroxytetradecanoyl-[acyl-carrier-protein] and UDP-N-acetyl-alpha-D-glucosamine: step 2/6. Its function is as follows. Catalyzes the hydrolysis of UDP-3-O-myristoyl-N-acetylglucosamine to form UDP-3-O-myristoylglucosamine and acetate, the committed step in lipid A biosynthesis. The sequence is that of UDP-3-O-acyl-N-acetylglucosamine deacetylase from Burkholderia lata (strain ATCC 17760 / DSM 23089 / LMG 22485 / NCIMB 9086 / R18194 / 383).